The sequence spans 169 residues: Putative outer membrane protein BBA03 (169 aa).

The protein localises to the cell outer membrane. This is Putative outer membrane protein BBA03 from Borreliella burgdorferi (strain ATCC 35210 / DSM 4680 / CIP 102532 / B31) (Borrelia burgdorferi).